The following is a 266-amino-acid chain: GFP-like fluorescent chromoprotein cFP484 (266 aa).

The segment at residues 104–106 (QYG) is a cross-link (2-iminomethyl-5-imidazolinone (Gln-Gly)). Position 105 is a 2,3-didehydrotyrosine (Tyr-105).

It belongs to the GFP family. In terms of processing, contains a chromophore consisting of modified amino acid residues. The chromophore is formed by autocatalytic backbone condensation between Xaa-N and Gly-(N+2), oxidation of Tyr-(N+1) to didehydrotyrosine, and formation of a double bond to the alpha-amino nitrogen of residue Xaa-N. Maturation of the chromophore requires nothing other than molecular oxygen. The precise stereochemistry of the tyrosine has not been determined. Tentacle and oral disk.

Functionally, pigment protein that is green in color. In Clavularia sp. (Brown star polyp), this protein is GFP-like fluorescent chromoprotein cFP484.